Consider the following 509-residue polypeptide: ATP synthase subunit alpha (509 aa).

169–176 serves as a coordination point for ATP; it reads GDRQTGKT.

It belongs to the ATPase alpha/beta chains family. In terms of assembly, F-type ATPases have 2 components, CF(1) - the catalytic core - and CF(0) - the membrane proton channel. CF(1) has five subunits: alpha(3), beta(3), gamma(1), delta(1), epsilon(1). CF(0) has three main subunits: a(1), b(2) and c(9-12). The alpha and beta chains form an alternating ring which encloses part of the gamma chain. CF(1) is attached to CF(0) by a central stalk formed by the gamma and epsilon chains, while a peripheral stalk is formed by the delta and b chains.

It localises to the cell inner membrane. The enzyme catalyses ATP + H2O + 4 H(+)(in) = ADP + phosphate + 5 H(+)(out). In terms of biological role, produces ATP from ADP in the presence of a proton gradient across the membrane. The alpha chain is a regulatory subunit. This is ATP synthase subunit alpha from Rhizobium leguminosarum bv. trifolii (strain WSM2304).